Consider the following 360-residue polypeptide: Phenylalanine--tRNA ligase alpha subunit (360 aa).

Glu260 contributes to the Mg(2+) binding site.

The protein belongs to the class-II aminoacyl-tRNA synthetase family. Phe-tRNA synthetase alpha subunit type 1 subfamily. Tetramer of two alpha and two beta subunits. It depends on Mg(2+) as a cofactor.

It is found in the cytoplasm. It carries out the reaction tRNA(Phe) + L-phenylalanine + ATP = L-phenylalanyl-tRNA(Phe) + AMP + diphosphate + H(+). The sequence is that of Phenylalanine--tRNA ligase alpha subunit from Rhodopseudomonas palustris (strain BisB5).